The primary structure comprises 740 residues: Ion-translocating oxidoreductase complex subunit C (740 aa).

4Fe-4S ferredoxin-type domains are found at residues 369-397 (GEPQ…QQLY) and 407-436 (KATT…VQYF). [4Fe-4S] cluster contacts are provided by Cys-377, Cys-380, Cys-383, Cys-387, Cys-416, Cys-419, Cys-422, and Cys-426. Disordered stretches follow at residues 571–590 (LEQQ…RKAA) and 602–716 (KLEQ…DPRK). 2 stretches are compositionally biased toward low complexity: residues 573 to 583 (QQQANAEPEQQ) and 637 to 647 (QQQANAEPEQQ).

It belongs to the 4Fe4S bacterial-type ferredoxin family. RnfC subfamily. As to quaternary structure, the complex is composed of six subunits: RsxA, RsxB, RsxC, RsxD, RsxE and RsxG. It depends on [4Fe-4S] cluster as a cofactor.

It is found in the cell inner membrane. Functionally, part of a membrane-bound complex that couples electron transfer with translocation of ions across the membrane. Required to maintain the reduced state of SoxR. Probably transfers electron from NAD(P)H to SoxR. The chain is Ion-translocating oxidoreductase complex subunit C from Escherichia coli (strain K12).